The sequence spans 43 residues: MEKALILSIFIFSLLLGITSYSIYISFGPLSKTLRDPFEEHEE.

Residues 5-25 (LILSIFIFSLLLGITSYSIYI) traverse the membrane as a helical segment.

The protein belongs to the PsbN family.

It localises to the plastid. Its subcellular location is the chloroplast thylakoid membrane. May play a role in photosystem I and II biogenesis. The chain is Protein PsbN from Cyanidium caldarium (Red alga).